The following is a 222-amino-acid chain: 3-dehydroquinate dehydratase (222 aa).

3-dehydroquinate-binding positions include 29 to 31 (ELR) and Arg-55. The Proton donor/acceptor role is filled by His-112. The Schiff-base intermediate with substrate role is filled by Lys-139. 3-dehydroquinate-binding residues include Arg-178, Ser-199, and Gln-203.

This sequence belongs to the type-I 3-dehydroquinase family. As to quaternary structure, homodimer.

It catalyses the reaction 3-dehydroquinate = 3-dehydroshikimate + H2O. It participates in metabolic intermediate biosynthesis; chorismate biosynthesis; chorismate from D-erythrose 4-phosphate and phosphoenolpyruvate: step 3/7. Functionally, involved in the third step of the chorismate pathway, which leads to the biosynthesis of aromatic amino acids. Catalyzes the cis-dehydration of 3-dehydroquinate (DHQ) and introduces the first double bond of the aromatic ring to yield 3-dehydroshikimate. This chain is 3-dehydroquinate dehydratase, found in Dehalococcoides mccartyi (strain ATCC BAA-2266 / KCTC 15142 / 195) (Dehalococcoides ethenogenes (strain 195)).